The primary structure comprises 381 residues: 3-hydroxyisobutyryl-CoA hydrolase, mitochondrial (381 aa).

The transit peptide at Met1–Val25 directs the protein to the mitochondrion. 4 residues coordinate substrate: Glu116, Gly141, Glu164, and Asp172.

It belongs to the enoyl-CoA hydratase/isomerase family.

The protein resides in the mitochondrion. The enzyme catalyses 3-hydroxy-2-methylpropanoyl-CoA + H2O = 3-hydroxy-2-methylpropanoate + CoA + H(+). It participates in amino-acid degradation; L-valine degradation. Its function is as follows. Hydrolyzes 3-hydroxyisobutyryl-CoA (HIBYL-CoA), a saline catabolite. In Dictyostelium discoideum (Social amoeba), this protein is 3-hydroxyisobutyryl-CoA hydrolase, mitochondrial (hibch).